The sequence spans 911 residues: Protein translocase subunit SecA (911 aa).

ATP is bound by residues glutamine 86, 104-108, and aspartate 512; that span reads GEGKT. The Zn(2+) site is built by cysteine 895, cysteine 897, cysteine 906, and histidine 907.

The protein belongs to the SecA family. In terms of assembly, monomer and homodimer. Part of the essential Sec protein translocation apparatus which comprises SecA, SecYEG and auxiliary proteins SecDF-YajC and YidC. It depends on Zn(2+) as a cofactor.

Its subcellular location is the cell inner membrane. The protein localises to the cytoplasm. It catalyses the reaction ATP + H2O + cellular proteinSide 1 = ADP + phosphate + cellular proteinSide 2.. Part of the Sec protein translocase complex. Interacts with the SecYEG preprotein conducting channel. Has a central role in coupling the hydrolysis of ATP to the transfer of proteins into and across the cell membrane, serving both as a receptor for the preprotein-SecB complex and as an ATP-driven molecular motor driving the stepwise translocation of polypeptide chains across the membrane. The polypeptide is Protein translocase subunit SecA (Bordetella bronchiseptica (strain ATCC BAA-588 / NCTC 13252 / RB50) (Alcaligenes bronchisepticus)).